Reading from the N-terminus, the 506-residue chain is Cysteine--tRNA ligase (506 aa).

Position 34 (C34) interacts with Zn(2+). The 'HIGH' region motif lies at 36–46; that stretch reads PTVYDFAHIGN. Residues C230, H269, and E273 each contribute to the Zn(2+) site. The short motif at 302–306 is the 'KMSKS' region element; the sequence is KMSKS. Residue K305 coordinates ATP.

The protein belongs to the class-I aminoacyl-tRNA synthetase family. In terms of assembly, monomer. Zn(2+) serves as cofactor.

It is found in the cytoplasm. The catalysed reaction is tRNA(Cys) + L-cysteine + ATP = L-cysteinyl-tRNA(Cys) + AMP + diphosphate. This chain is Cysteine--tRNA ligase, found in Brucella melitensis biotype 2 (strain ATCC 23457).